Consider the following 353-residue polypeptide: Alcohol dehydrogenase 1 (353 aa).

Cys-47, His-70, Cys-101, Cys-104, Cys-107, Cys-115, and Cys-157 together coordinate Zn(2+). NAD(+) contacts are provided by residues 181–187 (GAGGGLG), Asp-205, Lys-210, 274–276 (IGL), and Arg-346.

Belongs to the zinc-containing alcohol dehydrogenase family. Homotetramer. Requires Zn(2+) as cofactor.

The protein resides in the cytoplasm. The enzyme catalyses a primary alcohol + NAD(+) = an aldehyde + NADH + H(+). The catalysed reaction is a secondary alcohol + NAD(+) = a ketone + NADH + H(+). The protein is Alcohol dehydrogenase 1 (adh-1) of Neurospora crassa (strain ATCC 24698 / 74-OR23-1A / CBS 708.71 / DSM 1257 / FGSC 987).